A 345-amino-acid chain; its full sequence is NADH-quinone oxidoreductase subunit H (345 aa).

The Lumenal portion of the chain corresponds to 1–15 (MADFWATSLGQTLIL). A helical transmembrane segment spans residues 16–35 (LAQGLGIIAFVMIGLLLLVW). The Cytoplasmic segment spans residues 36-86 (GDRKIWAAVQMRKGPNVVGAFGLLQSVADAAKYVFKEIVVPAGVDKPVYFL). The chain crosses the membrane as a helical span at residues 87–106 (APMLSLVLALLAWVVVPFNE). At 107–110 (GWVM) the chain is on the lumenal side. Residues 111 to 130 (ADINVAVLFVFAVSSLEVYG) traverse the membrane as a helical segment. Over 131-156 (VIMGGWASNSKYPFLGSLRSAAQMIS) the chain is Cytoplasmic. Residues 157–176 (YEVSMGLIIVGVIISTGSMN) form a helical membrane-spanning segment. The Lumenal portion of the chain corresponds to 177 to 191 (LSAIVEAQRGDFGLL). A helical transmembrane segment spans residues 192-211 (NWYWLPHLPMVALFFISALA). The Cytoplasmic segment spans residues 212-245 (ETNRPPFDLPEAESELVAGFMVEYSSTPYLLFMA). A helical membrane pass occupies residues 246–265 (GEYIAVWLMCALTSVLFFGG). Topologically, residues 266-276 (WLSPIPGVPDG) are lumenal. Residues 277-296 (VLWMVAKMAAVFFVFAMVKA) traverse the membrane as a helical segment. Residues 297–313 (IVPRYRYDQLMRIGWKV) lie on the Cytoplasmic side of the membrane. Residues 314 to 333 (FLPLSLAWVVVVAFLAKFEV) traverse the membrane as a helical segment. Residues 334 to 345 (LGGFWARWSIGA) lie on the Lumenal side of the membrane.

It belongs to the complex I subunit 1 family. NDH-1 is composed of 14 different subunits. Subunits NuoA, H, J, K, L, M, N constitute the membrane sector of the complex.

The protein resides in the cellular chromatophore membrane. It catalyses the reaction a quinone + NADH + 5 H(+)(in) = a quinol + NAD(+) + 4 H(+)(out). Functionally, NDH-1 shuttles electrons from NADH, via FMN and iron-sulfur (Fe-S) centers, to quinones in the respiratory chain. The immediate electron acceptor for the enzyme in this species is believed to be ubiquinone. Couples the redox reaction to proton translocation (for every two electrons transferred, four hydrogen ions are translocated across the cytoplasmic membrane), and thus conserves the redox energy in a proton gradient. This subunit may bind ubiquinone. This Rhodobacter capsulatus (Rhodopseudomonas capsulata) protein is NADH-quinone oxidoreductase subunit H.